A 602-amino-acid polypeptide reads, in one-letter code: Elongation factor 4 (602 aa).

The region spanning 7–189 (KYIRNFSIVA…AIVNKVPAPD (183 aa)) is the tr-type G domain. GTP contacts are provided by residues 19–24 (DHGKST) and 136–139 (NKID).

It belongs to the TRAFAC class translation factor GTPase superfamily. Classic translation factor GTPase family. LepA subfamily.

The protein resides in the cell membrane. It catalyses the reaction GTP + H2O = GDP + phosphate + H(+). Required for accurate and efficient protein synthesis under certain stress conditions. May act as a fidelity factor of the translation reaction, by catalyzing a one-codon backward translocation of tRNAs on improperly translocated ribosomes. Back-translocation proceeds from a post-translocation (POST) complex to a pre-translocation (PRE) complex, thus giving elongation factor G a second chance to translocate the tRNAs correctly. Binds to ribosomes in a GTP-dependent manner. The polypeptide is Elongation factor 4 (Clostridium botulinum (strain 657 / Type Ba4)).